A 506-amino-acid chain; its full sequence is AMP phosphorylase (506 aa).

AMP-binding positions include G168, 194–199 (SRAITG), and T203. Catalysis depends on D256, which acts as the Proton donor. AMP is bound by residues S264 and K288.

This sequence belongs to the thymidine/pyrimidine-nucleoside phosphorylase family. Type 2 subfamily.

It carries out the reaction AMP + phosphate = alpha-D-ribose 1,5-bisphosphate + adenine. The catalysed reaction is CMP + phosphate = cytosine + alpha-D-ribose 1,5-bisphosphate. It catalyses the reaction UMP + phosphate = alpha-D-ribose 1,5-bisphosphate + uracil. In terms of biological role, catalyzes the conversion of AMP and phosphate to adenine and ribose 1,5-bisphosphate (R15P). Exhibits phosphorylase activity toward CMP and UMP in addition to AMP. Functions in an archaeal AMP degradation pathway, together with R15P isomerase and RubisCO. The sequence is that of AMP phosphorylase from Methanococcoides burtonii (strain DSM 6242 / NBRC 107633 / OCM 468 / ACE-M).